A 503-amino-acid chain; its full sequence is Probable cytosol aminopeptidase (503 aa).

Residues lysine 274 and aspartate 279 each contribute to the Mn(2+) site. Residue lysine 286 is part of the active site. Residues aspartate 297, aspartate 356, and glutamate 358 each coordinate Mn(2+). The active site involves arginine 360.

It belongs to the peptidase M17 family. It depends on Mn(2+) as a cofactor.

It localises to the cytoplasm. It carries out the reaction Release of an N-terminal amino acid, Xaa-|-Yaa-, in which Xaa is preferably Leu, but may be other amino acids including Pro although not Arg or Lys, and Yaa may be Pro. Amino acid amides and methyl esters are also readily hydrolyzed, but rates on arylamides are exceedingly low.. The catalysed reaction is Release of an N-terminal amino acid, preferentially leucine, but not glutamic or aspartic acids.. In terms of biological role, presumably involved in the processing and regular turnover of intracellular proteins. Catalyzes the removal of unsubstituted N-terminal amino acids from various peptides. The polypeptide is Probable cytosol aminopeptidase (Burkholderia orbicola (strain AU 1054)).